Reading from the N-terminus, the 753-residue chain is Bifunctional terpene synthase FUP1 (753 aa).

The interval 1-329 (MGPLLYRSRH…CSACPRQNAW (329 aa)) is terpene cyclase. Asp-96 contributes to the Mg(2+) binding site. The short motif at 96 to 100 (DDTGE) is the DDXXD 1 element. The NSE/DTE motif lies at 231-239 (NDYFSWERE). The segment at 330–745 (KNDTLSNGQN…MLRLCLAKLS (416 aa)) is prenyltransferase. Lys-461, Arg-464, and His-493 together coordinate isopentenyl diphosphate. Mg(2+) contacts are provided by Asp-500 and Asp-504. The DDXXD 2 signature appears at 500 to 504 (DDLED). Arg-509 serves as a coordination point for dimethylallyl diphosphate. Arg-510 lines the isopentenyl diphosphate pocket. 6 residues coordinate dimethylallyl diphosphate: Lys-587, Thr-588, Gln-625, Asn-632, Lys-640, and Lys-650.

This sequence in the N-terminal section; belongs to the terpene synthase family. In the C-terminal section; belongs to the FPP/GGPP synthase family. In terms of assembly, hexamer. Mg(2+) serves as cofactor.

The enzyme catalyses isopentenyl diphosphate + (2E,6E)-farnesyl diphosphate = (2E,6E,10E)-geranylgeranyl diphosphate + diphosphate. The protein operates within secondary metabolite biosynthesis; terpenoid biosynthesis. Its function is as follows. Bifunctional terpene synthase; part of the gene cluster that mediates the biosynthesis of the mycotoxin fusaproliferin (FUP) that belongs to the class of bicyclic sesterterpenoids. The FUP biosynthetic pathway starts with the enzyme encoded by FUP1 that combines a C-terminal prenyltransferase domain responsible for the synthesis of geranylgeranyl diphosphate with the N-terminal terpene cyclase domain, to yield preterpestacin I. Preterpestacin I is then decorated by oxygenation steps that are catalyzed by two cytochrome P450 monooxygenases. First, FUP2 introduces a hydroxyl group at the C-24 position resulting in the formation of preterpestacin IIa, which can be further oxidized. The second P450 monooxygenase catalyzes the hydroxylation at C-16 and C-17 of preterpestacin IIa, producing preterpestacin III. Subsequently, the FAD-dependent oxidoreductase FUP4 catalyzes the oxidation of the hydroxy group at the C-16 position to a keto group, leading to the formation of (-)-terpestacin, which is the immediate precursor of FUP. The final step in the proposed biosynthetic pathway is the addition of an acetyl group at the C-24 position of terpestacin, which is catalyzed by the acetyltransferase FUP5. The polypeptide is Bifunctional terpene synthase FUP1 (Fusarium proliferatum (strain ET1) (Orchid endophyte fungus)).